The chain runs to 659 residues: Homeobox protein slou (659 aa).

A compositionally biased stretch (polar residues) spans 1–21 (MVMLQSPAQKASDSASAQNTA). 6 disordered regions span residues 1–63 (MVML…PAAK), 94–152 (MSSE…SFSS), 198–298 (AQQH…AAPS), 316–349 (TQAS…PSGR), 376–440 (QIAA…DRDA), and 455–548 (PNKF…PRRA). Composition is skewed to low complexity over residues 27–51 (SPNS…SVVS), 95–108 (SSES…LSPL), and 120–135 (HNNN…NSNT). The segment covering 136-152 (RRSQSPPASVGSVSFSS) has biased composition (polar residues). Residues 201 to 232 (HMHHHQHQHHQHPAHPHSHQHPHPHPHPHPHP) show a composition bias toward basic residues. 7 tandem repeats follow at residues 221–222 (HP), 223–224 (HP), 225–226 (HP), 227–228 (HP), 229–230 (HP), 231–232 (HP), and 233–234 (HP). The 7 X 2 AA tandem repeats of H-P stretch occupies residues 221 to 234 (HPHPHPHPHPHPHP). Composition is skewed to pro residues over residues 250–263 (PPSP…PPTS) and 275–286 (PIAPPQNPPHSS). Composition is skewed to low complexity over residues 287–298 (QPPQQQQVAAPS) and 316–347 (TQAS…GSPS). Positions 388-401 (SEELNVDGNDEDSN) are enriched in acidic residues. Residues 417-435 (RSVNSSAAANPSSASTSAS) show a composition bias toward low complexity. Acidic residues-rich tracts occupy residues 478 to 492 (RDEE…DQSE) and 500 to 519 (NDMD…DPSS). The span at 528–543 (SRNGDGKSGGGGGGGS) shows a compositional bias: gly residues. Residues 545–604 (PRRARTAFTYEQLVSLENKFKTTRYLSVCERLNLALSLSLTETQVKIWFQNRRTKWKKQN) constitute a DNA-binding region (homeobox).

The protein belongs to the NK-1 homeobox family. Mesodermal precursor cells of distinct muscles during embryogenesis, a subset of neuronal cells of the CNS and their precursors and also in cells of a small region of the midgut.

It localises to the nucleus. May play a role in specifying the identity of particular somatic muscles and neurons of the CNS. The protein is Homeobox protein slou (slou) of Drosophila melanogaster (Fruit fly).